The following is a 494-amino-acid chain: Glutamate--tRNA ligase (494 aa).

The 'HIGH' region motif lies at 10–20 (PSPTGDPHVGT). Zn(2+) is bound by residues C107, C109, C134, and H136. Positions 251–255 (KLSKR) match the 'KMSKS' region motif. Position 254 (K254) interacts with ATP.

The protein belongs to the class-I aminoacyl-tRNA synthetase family. Glutamate--tRNA ligase type 1 subfamily. As to quaternary structure, monomer. Zn(2+) serves as cofactor.

It localises to the cytoplasm. It catalyses the reaction tRNA(Glu) + L-glutamate + ATP = L-glutamyl-tRNA(Glu) + AMP + diphosphate. Its function is as follows. Catalyzes the attachment of glutamate to tRNA(Glu) in a two-step reaction: glutamate is first activated by ATP to form Glu-AMP and then transferred to the acceptor end of tRNA(Glu). The polypeptide is Glutamate--tRNA ligase (Pseudomonas aeruginosa (strain UCBPP-PA14)).